We begin with the raw amino-acid sequence, 561 residues long: uncharacterized protein (561 aa).

Disordered regions lie at residues 369 to 390 (SVPE…LSKG) and 429 to 515 (EGLG…GESE). S383 carries the post-translational modification Phosphoserine. Polar residues predominate over residues 465–503 (NISPESSRFGTPSDPNSSSQSLGNEVLSRPNSNSNSAES).

This is an uncharacterized protein from Schizosaccharomyces pombe (strain 972 / ATCC 24843) (Fission yeast).